Consider the following 29-residue polypeptide: Brevinin-2Rc (29 aa).

Cysteine 23 and cysteine 29 form a disulfide bridge.

As to expression, expressed by the skin glands.

It is found in the secreted. Its function is as follows. Antimicrobial peptide. The sequence is that of Brevinin-2Rc from Pelophylax ridibundus (Marsh frog).